The sequence spans 246 residues: Deoxycytidylate 5-hydroxymethyltransferase (246 aa).

The active site involves C148.

This sequence belongs to the thymidylate synthase family.

It catalyses the reaction dCMP + (6R)-5,10-methylene-5,6,7,8-tetrahydrofolate + H2O = 5-hydroxymethyl-dCMP + (6S)-5,6,7,8-tetrahydrofolate. This chain is Deoxycytidylate 5-hydroxymethyltransferase (42), found in Enterobacteria phage T6 (Bacteriophage T6).